Consider the following 247-residue polypeptide: ATP synthase subunit a, chloroplastic (247 aa).

A run of 5 helical transmembrane segments spans residues 38–58 (QVLI…IVTV), 95–115 (VPFI…GALL), 134–154 (INTT…AGLS), 199–219 (LVVV…VMFL), and 220–240 (GLFT…AYIG).

The protein belongs to the ATPase A chain family. In terms of assembly, F-type ATPases have 2 components, CF(1) - the catalytic core - and CF(0) - the membrane proton channel. CF(1) has five subunits: alpha(3), beta(3), gamma(1), delta(1), epsilon(1). CF(0) has four main subunits: a, b, b' and c.

The protein resides in the plastid. It is found in the chloroplast thylakoid membrane. Functionally, key component of the proton channel; it plays a direct role in the translocation of protons across the membrane. The polypeptide is ATP synthase subunit a, chloroplastic (Populus trichocarpa (Western balsam poplar)).